Here is a 517-residue protein sequence, read N- to C-terminus: Peptide chain release factor 3 (517 aa).

One can recognise a tr-type G domain in the interval 9 to 269; the sequence is AKRRTFAIIS…DFVEHAPAPR (261 aa). Residues 18-25, 86-90, and 140-143 each bind GTP; these read SHPDAGKT, DTPGH, and NKLD.

It belongs to the TRAFAC class translation factor GTPase superfamily. Classic translation factor GTPase family. PrfC subfamily.

Its subcellular location is the cytoplasm. Increases the formation of ribosomal termination complexes and stimulates activities of RF-1 and RF-2. It binds guanine nucleotides and has strong preference for UGA stop codons. It may interact directly with the ribosome. The stimulation of RF-1 and RF-2 is significantly reduced by GTP and GDP, but not by GMP. The chain is Peptide chain release factor 3 from Halorhodospira halophila (strain DSM 244 / SL1) (Ectothiorhodospira halophila (strain DSM 244 / SL1)).